The sequence spans 172 residues: RNA pyrophosphohydrolase (172 aa).

The 144-residue stretch at 6 to 149 (GYRLNVGIVI…KRDVYRRAMK (144 aa)) folds into the Nudix hydrolase domain. The Nudix box signature appears at 38–59 (GGIDDGETPEQAMFRELYEEVG).

This sequence belongs to the Nudix hydrolase family. RppH subfamily. Requires a divalent metal cation as cofactor.

Functionally, accelerates the degradation of transcripts by removing pyrophosphate from the 5'-end of triphosphorylated RNA, leading to a more labile monophosphorylated state that can stimulate subsequent ribonuclease cleavage. The chain is RNA pyrophosphohydrolase from Vibrio vulnificus (strain CMCP6).